The primary structure comprises 398 residues: Bone morphogenetic protein 2-A (398 aa).

Positions 1 to 23 (MVAGIHSLLLLLFYQVLLSGCTG) are cleaved as a signal peptide. A propeptide spanning residues 24-284 (LIPEEGKRKY…GHALHKRQKR (261 aa)) is cleaved from the precursor. Asn-137, Asn-202, and Asn-340 each carry an N-linked (GlcNAc...) asparagine glycan. 3 disulfide bridges follow: Cys-298–Cys-363, Cys-327–Cys-395, and Cys-331–Cys-397.

The protein belongs to the TGF-beta family. As to quaternary structure, homodimer; disulfide-linked.

It localises to the secreted. Its function is as follows. Induces cartilage and bone formation. This Xenopus laevis (African clawed frog) protein is Bone morphogenetic protein 2-A (bmp2-a).